A 318-amino-acid chain; its full sequence is Mitochondrial thiamine pyrophosphate carrier (318 aa).

Solcar repeat units lie at residues 13–106, 116–202, and 214–309; these read NSKL…LTEL, HQFS…LKRA, and TGNL…FCNL. 5 consecutive transmembrane segments (helical) span residues 19-39, 87-107, 122-142, 173-193, and 220-240; these read AVAG…LDVI, ILSI…TELL, FVCG…VDVL, VFYK…GLQF, and LLCG…LDLI. Residues 241 to 246 carry the Substrate recognition motif; sequence KKRLQV. Residues 293–313 form a helical membrane-spanning segment; it reads ALSTGFMFFWYELFCNLFHCI.

This sequence belongs to the mitochondrial carrier (TC 2.A.29) family.

The protein localises to the mitochondrion membrane. The enzyme catalyses thiamine phosphate(out) + thiamine diphosphate(in) = thiamine phosphate(in) + thiamine diphosphate(out). Functionally, mitochondrial transporter mediating uptake of thiamine diphosphate into mitochondria. It is not clear if the antiporter activity is affected by the membrane potential or by the proton electrochemical gradient. This Mus musculus (Mouse) protein is Mitochondrial thiamine pyrophosphate carrier (Slc25a19).